We begin with the raw amino-acid sequence, 519 residues long: NADH-ubiquinone oxidoreductase chain 4 (519 aa).

A run of 14 helical transmembrane segments spans residues 2-22 (SGLL…ILSF), 68-88 (IAFI…ILFD), 112-132 (VDGL…IALI), 146-166 (LIII…LDVL), 167-187 (LFYI…GLFG), 196-216 (FYIF…ILTM), 239-259 (IFLF…VFLN), 270-290 (PLGG…YGIF), 304-324 (YTSI…FSTL), 333-353 (IAYS…SNII), 360-380 (ILLG…AGGV), 399-419 (VMPL…GAPL), 437-457 (LPLL…YTIY), and 484-504 (FFLL…PSFI).

This sequence belongs to the complex I subunit 4 family.

The protein localises to the mitochondrion membrane. It catalyses the reaction a ubiquinone + NADH + 5 H(+)(in) = a ubiquinol + NAD(+) + 4 H(+)(out). In terms of biological role, core subunit of the mitochondrial membrane respiratory chain NADH dehydrogenase (Complex I) that is believed to belong to the minimal assembly required for catalysis. Complex I functions in the transfer of electrons from NADH to the respiratory chain. The immediate electron acceptor for the enzyme is believed to be ubiquinone. This chain is NADH-ubiquinone oxidoreductase chain 4 (ND4), found in Podospora anserina (strain S / ATCC MYA-4624 / DSM 980 / FGSC 10383) (Pleurage anserina).